Reading from the N-terminus, the 483-residue chain is Regulatory protein ViaA (483 aa).

Belongs to the ViaA family. In terms of assembly, homodimer. Interacts with RavA.

The protein localises to the cytoplasm. Functionally, component of the RavA-ViaA chaperone complex, which may act on the membrane to optimize the function of some of the respiratory chains. ViaA stimulates the ATPase activity of RavA. The protein is Regulatory protein ViaA of Salmonella schwarzengrund (strain CVM19633).